The chain runs to 323 residues: D-alanine--D-alanine ligase (323 aa).

The region spanning 120-319 is the ATP-grasp domain; sequence LSVLKPYGIK…LEDLFTNAIE (200 aa). 148–203 contributes to the ATP binding site; the sequence is VKKVGLPCFVKPNKAGSSFGISKVKSEAELPIAIEVAYKEDNEIIIESFLDGTEVS. Residues Glu-274, Glu-286, and Asn-288 each coordinate Mg(2+).

It belongs to the D-alanine--D-alanine ligase family. Requires Mg(2+) as cofactor. Mn(2+) serves as cofactor.

It localises to the cytoplasm. The enzyme catalyses 2 D-alanine + ATP = D-alanyl-D-alanine + ADP + phosphate + H(+). It functions in the pathway cell wall biogenesis; peptidoglycan biosynthesis. Cell wall formation. This is D-alanine--D-alanine ligase from Flavobacterium johnsoniae (strain ATCC 17061 / DSM 2064 / JCM 8514 / BCRC 14874 / CCUG 350202 / NBRC 14942 / NCIMB 11054 / UW101) (Cytophaga johnsonae).